The sequence spans 581 residues: Sulfate adenylyltransferase (581 aa).

Residues 1 to 176 (MANAPHGGVL…VQAIQAPTHF (176 aa)) form an N-terminal region. Positions 177 to 401 (DYVPLRYTPA…LRESYPPRPQ (225 aa)) are catalytic. Glutamine 204 serves as a coordination point for sulfate. ATP contacts are provided by residues 204 to 207 (QTRN) and 298 to 301 (GRDH). Residues threonine 205, arginine 206, and asparagine 207 contribute to the active site. Position 206 (arginine 206) interacts with sulfate. Residue alanine 302 coordinates sulfate. Methionine 340 lines the ATP pocket. Residues 402-581 (QGFTILLTGL…IMILESQNLV (180 aa)) form an allosteric regulation domain; adenylyl-sulfate kinase-like region. 3'-phosphoadenylyl sulfate contacts are provided by residues 441–444 (EELR), 486–487 (TA), and arginine 526.

It in the N-terminal section; belongs to the sulfate adenylyltransferase family. In the C-terminal section; belongs to the APS kinase family. Homohexamer. Dimer of trimers.

It is found in the cytoplasm. It catalyses the reaction sulfate + ATP + H(+) = adenosine 5'-phosphosulfate + diphosphate. The protein operates within sulfur metabolism; hydrogen sulfide biosynthesis; sulfite from sulfate: step 1/3. Allosterically inhibited by 3'-phosphoadenosine 5'-phosphosulfate (PAPS). Catalyzes the first intracellular reaction of sulfate assimilation, forming adenosine-5'-phosphosulfate (APS) from inorganic sulfate and ATP. Plays an important role in sulfate activation as a component of the biosynthesis pathway of sulfur-containing amino acids. The polypeptide is Sulfate adenylyltransferase (Cryptococcus neoformans var. grubii serotype A (strain H99 / ATCC 208821 / CBS 10515 / FGSC 9487) (Filobasidiella neoformans var. grubii)).